The sequence spans 151 residues: Immunity protein YezG (151 aa).

Residues 62–90 (KDIFKTLLRELRELFEELRTEHRNNNDDV) are a coiled coil.

Interacts with cognate toxin YeeF but not with non-cognate toxin YobL. The interaction probably inhibits the toxic activity of YeeF. May bind with a stoichiometry of 2:2 to YeeF.

It localises to the cytoplasm. Its function is as follows. Immunity component of one of 6 LXG toxin-immunity modules in this strain. They promote kin selection, mediate competition in biofilms, and drive spatial segregation of different strains, indicating that LXG toxins may help avoid warfare between strains in biofilms. Mediates intercellular competition during biofilm formation; disruption of the operon disadvantages the bacteria, but overexpression of the cognate immunity protein restores growth in competition with wild-type. In situ neutralizes the toxic effect of cognate toxin YeeF. Probably neutralizes the ability to inhibit growth of cognate toxin YeeF. Probably does not have immunity protein activity on other LXG toxins. The protein is Immunity protein YezG (yezG) of Bacillus subtilis (strain 168).